Reading from the N-terminus, the 131-residue chain is Aspartate 1-decarboxylase (131 aa).

Catalysis depends on Ser25, which acts as the Schiff-base intermediate with substrate; via pyruvic acid. Pyruvic acid (Ser) is present on Ser25. Thr57 is a substrate binding site. Tyr58 acts as the Proton donor in catalysis. Residue Gly73–Ala75 coordinates substrate.

Belongs to the PanD family. As to quaternary structure, heterooctamer of four alpha and four beta subunits. It depends on pyruvate as a cofactor. Is synthesized initially as an inactive proenzyme, which is activated by self-cleavage at a specific serine bond to produce a beta-subunit with a hydroxyl group at its C-terminus and an alpha-subunit with a pyruvoyl group at its N-terminus.

Its subcellular location is the cytoplasm. It catalyses the reaction L-aspartate + H(+) = beta-alanine + CO2. It functions in the pathway cofactor biosynthesis; (R)-pantothenate biosynthesis; beta-alanine from L-aspartate: step 1/1. Catalyzes the pyruvoyl-dependent decarboxylation of aspartate to produce beta-alanine. This Acaryochloris marina (strain MBIC 11017) protein is Aspartate 1-decarboxylase.